We begin with the raw amino-acid sequence, 231 residues long: MKRAVVVFSGGQDSTTCLAQARHQYDEVHCVTFDYGQRHRAEIDVARALALKLGARAHKVLDVTLLNELAVSSLTRDSIPVPDYEPNADGIPNTFVPGRNILFLTLAAIYAYQVKAEAVITGVCETDFSGYPDCRDEFVKALNHAVNLGMAKDIRFETPLMWIDKAETWALADYWGQLELVREETLTCYNGIKGDGCGHCAACNLRANGLNHYLSNKAAVMAAMKQKTGLR.

Residue 8–18 (FSGGQDSTTCL) coordinates ATP. Zn(2+)-binding residues include Cys188, Cys197, Cys200, and Cys203.

This sequence belongs to the QueC family. It depends on Zn(2+) as a cofactor.

The catalysed reaction is 7-carboxy-7-deazaguanine + NH4(+) + ATP = 7-cyano-7-deazaguanine + ADP + phosphate + H2O + H(+). It participates in purine metabolism; 7-cyano-7-deazaguanine biosynthesis. Its function is as follows. Catalyzes the ATP-dependent conversion of 7-carboxy-7-deazaguanine (CDG) to 7-cyano-7-deazaguanine (preQ(0)). This Salmonella schwarzengrund (strain CVM19633) protein is 7-cyano-7-deazaguanine synthase.